The following is a 413-amino-acid chain: Histidine--tRNA ligase (413 aa).

The protein belongs to the class-II aminoacyl-tRNA synthetase family. Homodimer.

It is found in the cytoplasm. The catalysed reaction is tRNA(His) + L-histidine + ATP = L-histidyl-tRNA(His) + AMP + diphosphate + H(+). The polypeptide is Histidine--tRNA ligase (Neorickettsia sennetsu (strain ATCC VR-367 / Miyayama) (Ehrlichia sennetsu)).